The sequence spans 117 residues: Minor capsid protein VP2 (117 aa).

Belongs to the lagovirus VP2 protein family. Homooligomer. The portal-like structure consists in 12 copies of VP2. Interacts with capsid protein VP1.

The protein resides in the virion. It localises to the host cytoplasm. Functionally, minor structural protein that forms a portal-like structure at a unique three-fold axis of symmetry, following binding to the host receptor. The channel formed by VP2 may allow the delivery of the viral genome through the host endosomal membrane. The chain is Minor capsid protein VP2 from Rabbit hemorrhagic disease virus (strain AST89) (Ra/LV/RHDV/AST89/1989/SP).